The following is a 180-amino-acid chain: Signaling threshold-regulating transmembrane adapter 1 (180 aa).

Residues 1–24 (MSRDYNCTTDDQLAWGIPSISHAW) are Extracellular-facing. Asparagine 6 is a glycosylation site (N-linked (GlcNAc...) asparagine). The helical; Signal-anchor for type III membrane protein transmembrane segment at 25-45 (GLWALLGVVTVLLLISLAALL) threads the bilayer. Topologically, residues 46–180 (SQWTRGRRRN…AYANSQPAPS (135 aa)) are cytoplasmic. Phosphoserine occurs at positions 63 and 66. Position 73 is a phosphotyrosine (tyrosine 73). An interaction with GRB2 region spans residues 73-76 (YGNL). Residues 81–103 (TGRLSQEPRSEEQDPPSSGGLAR) are disordered. Phosphoserine is present on residues serine 85 and serine 90. Tyrosine 111, tyrosine 132, and tyrosine 153 each carry phosphotyrosine. Residues 130 to 135 (IKYCEV) are interaction with PTPN11. The interval 153-156 (YASV) is interaction with CSK. Phosphoserine is present on serine 166. The residue at position 172 (tyrosine 172) is a Phosphotyrosine. The tract at residues 172–175 (YANS) is interaction with GRB2.

In terms of assembly, homodimer; disulfide-linked. When phosphorylated, interacts with PTPN11/SHP2, GRB2 and CSK. Post-translationally, phosphorylated on tyrosines upon TCR activation; which leads to the recruitment of PTPN11, GRB2 and CSK. As to expression, expressed in thymus and spleen, with highest levels in immature thymocytes (at protein level).

The protein localises to the cell membrane. Negatively regulates T-cell antigen receptor (TCR)-mediated signaling. Involved in positive selection of T-cells. The sequence is that of Signaling threshold-regulating transmembrane adapter 1 (Sit1) from Mus musculus (Mouse).